The following is a 622-amino-acid chain: Kelch-like protein 14 (622 aa).

The BTB domain maps to C33 to L145. Positions A73–K108 are disordered. Positions P87 to E96 are enriched in pro residues. Kelch repeat units lie at residues M317–N366, F367–K418, N419–G465, I467–D512, L514–D564, and I566–L614.

It localises to the cytoplasm. It is found in the cytosol. The protein localises to the endoplasmic reticulum membrane. The chain is Kelch-like protein 14 (KLHL14) from Gallus gallus (Chicken).